A 356-amino-acid polypeptide reads, in one-letter code: Histidinol-phosphate aminotransferase 2 (356 aa).

Lys-217 is subject to N6-(pyridoxal phosphate)lysine.

This sequence belongs to the class-II pyridoxal-phosphate-dependent aminotransferase family. Histidinol-phosphate aminotransferase subfamily. Homodimer. Pyridoxal 5'-phosphate serves as cofactor.

It carries out the reaction L-histidinol phosphate + 2-oxoglutarate = 3-(imidazol-4-yl)-2-oxopropyl phosphate + L-glutamate. It participates in amino-acid biosynthesis; L-histidine biosynthesis; L-histidine from 5-phospho-alpha-D-ribose 1-diphosphate: step 7/9. This is Histidinol-phosphate aminotransferase 2 from Burkholderia pseudomallei (strain 1710b).